A 251-amino-acid chain; its full sequence is 5'-nucleotidase SurE (251 aa).

Positions 8, 9, 39, and 91 each coordinate a divalent metal cation.

It belongs to the SurE nucleotidase family. Requires a divalent metal cation as cofactor.

The protein localises to the cytoplasm. The catalysed reaction is a ribonucleoside 5'-phosphate + H2O = a ribonucleoside + phosphate. Its function is as follows. Nucleotidase that shows phosphatase activity on nucleoside 5'-monophosphates. In Methylococcus capsulatus (strain ATCC 33009 / NCIMB 11132 / Bath), this protein is 5'-nucleotidase SurE.